The following is a 174-amino-acid chain: ATP-dependent protease subunit HslV (174 aa).

Thr2 is an active-site residue. Na(+)-binding residues include Gly157, Cys160, and Thr163.

It belongs to the peptidase T1B family. HslV subfamily. A double ring-shaped homohexamer of HslV is capped on each side by a ring-shaped HslU homohexamer. The assembly of the HslU/HslV complex is dependent on binding of ATP.

The protein localises to the cytoplasm. It carries out the reaction ATP-dependent cleavage of peptide bonds with broad specificity.. Its activity is regulated as follows. Allosterically activated by HslU binding. Its function is as follows. Protease subunit of a proteasome-like degradation complex believed to be a general protein degrading machinery. The polypeptide is ATP-dependent protease subunit HslV (Shewanella pealeana (strain ATCC 700345 / ANG-SQ1)).